A 699-amino-acid chain; its full sequence is Integrator complex subunit 10 (699 aa).

A phosphoserine mark is found at S220 and S370. K453 is covalently cross-linked (Glycyl lysine isopeptide (Lys-Gly) (interchain with G-Cter in SUMO2)).

Belongs to the Integrator subunit 10 family. In terms of assembly, component of the Integrator complex, composed of core subunits INTS1, INTS2, INTS3, INTS4, INTS5, INTS6, INTS7, INTS8, INTS9/RC74, INTS10, INTS11/CPSF3L, INTS12, INTS13, INTS14 and INTS15. The core complex associates with protein phosphatase 2A subunits PPP2CA and PPP2R1A, to form the Integrator-PP2A (INTAC) complex. INTS10 is part of the tail subcomplex, composed of INTS10, INTS13, INTS14 and INTS15.

The protein localises to the nucleus. Component of the integrator complex, a multiprotein complex that terminates RNA polymerase II (Pol II) transcription in the promoter-proximal region of genes. The integrator complex provides a quality checkpoint during transcription elongation by driving premature transcription termination of transcripts that are unfavorably configured for transcriptional elongation: the complex terminates transcription by (1) catalyzing dephosphorylation of the C-terminal domain (CTD) of Pol II subunit POLR2A/RPB1 and SUPT5H/SPT5, (2) degrading the exiting nascent RNA transcript via endonuclease activity and (3) promoting the release of Pol II from bound DNA. The integrator complex is also involved in terminating the synthesis of non-coding Pol II transcripts, such as enhancer RNAs (eRNAs), small nuclear RNAs (snRNAs), telomerase RNAs and long non-coding RNAs (lncRNAs). Within the integrator complex, INTS10 is part of the integrator tail module that acts as a platform for the recruitment of transcription factors at promoters. May be not involved in the recruitment of cytoplasmic dynein to the nuclear envelope, probably as component of the integrator complex. The chain is Integrator complex subunit 10 (INTS10) from Macaca fascicularis (Crab-eating macaque).